Reading from the N-terminus, the 203-residue chain is Ribosome maturation factor RimP (203 aa).

The span at 1–21 (MSDSEATTSTDRSESNSTATI) shows a compositional bias: polar residues. The tract at residues 1-23 (MSDSEATTSTDRSESNSTATIHN) is disordered.

It belongs to the RimP family.

It is found in the cytoplasm. Its function is as follows. Required for maturation of 30S ribosomal subunits. The chain is Ribosome maturation factor RimP from Paenarthrobacter aurescens (strain TC1).